We begin with the raw amino-acid sequence, 617 residues long: Dihydroxy-acid dehydratase (617 aa).

Mg(2+) is bound at residue Asp81. Cys122 provides a ligand contact to [2Fe-2S] cluster. Residues Asp123 and Lys124 each contribute to the Mg(2+) site. Lys124 is modified (N6-carboxylysine). Cys195 serves as a coordination point for [2Fe-2S] cluster. Glu491 contacts Mg(2+). The active-site Proton acceptor is Ser517.

It belongs to the IlvD/Edd family. Homodimer. The cofactor is [2Fe-2S] cluster. It depends on Mg(2+) as a cofactor.

It catalyses the reaction (2R)-2,3-dihydroxy-3-methylbutanoate = 3-methyl-2-oxobutanoate + H2O. It carries out the reaction (2R,3R)-2,3-dihydroxy-3-methylpentanoate = (S)-3-methyl-2-oxopentanoate + H2O. The protein operates within amino-acid biosynthesis; L-isoleucine biosynthesis; L-isoleucine from 2-oxobutanoate: step 3/4. It functions in the pathway amino-acid biosynthesis; L-valine biosynthesis; L-valine from pyruvate: step 3/4. Functions in the biosynthesis of branched-chain amino acids. Catalyzes the dehydration of (2R,3R)-2,3-dihydroxy-3-methylpentanoate (2,3-dihydroxy-3-methylvalerate) into 2-oxo-3-methylpentanoate (2-oxo-3-methylvalerate) and of (2R)-2,3-dihydroxy-3-methylbutanoate (2,3-dihydroxyisovalerate) into 2-oxo-3-methylbutanoate (2-oxoisovalerate), the penultimate precursor to L-isoleucine and L-valine, respectively. The protein is Dihydroxy-acid dehydratase of Rhodospirillum rubrum (strain ATCC 11170 / ATH 1.1.1 / DSM 467 / LMG 4362 / NCIMB 8255 / S1).